Here is a 752-residue protein sequence, read N- to C-terminus: MSNTEELIQNSIGFLQKTFKALPVSFDSIRHEPLPSSMLHASVLNFEWEPLEKNISAIHDRDSLIDIILKRFIIDSMTNAIEDEEENNLEKGLLNSCIGLDFVYNSRFNRSNPASWGNTFFELFSTIIDLLNSPSTFLKFWPYAESRIEWFKMNTSVEPVSLGESNLISYKQPLYEKLRHWNDILAKLENNDILNTVKHYNMKYKLENFLSELLPINEESNFNRSASISALQESDNEWNRSARERESNRSSDVIFAADYNFVFYHLIICPIEFAFSDLEYKNDVDRSLSPLLDAILEIEENFYSKIKMNNRTRYSLEEALNTEYYANYDVMTPKLPVYMKHSNAMKMDRNEFWANLQNIKESDDYTLRPTIMDISLSNTTCLYKQLTQEDDDYYRKQFILQLCFTTNLIRNLISSDETRNFYKSCYLRENPLSDIDFENLDEVNKKRGLNLCSYICDNRVLKFYKIKDPDFYRVIRKLMSSDEKFTTAKIDGFKEFQNFRISKEKIPPPAFDETFKKFTFIKMGNKLINNVWKIPTGLDKIEQEVKKPEGVYEAAQAKWESKISSETSGGEAKDEIIRQWQTLRFLRSRYLFDFDKVNEKTGVDGLFEEPRKVEALDDSFKEKLLYKINQEHRKKLQDAREYKIGKERKKRALEEEASFPEREQKIKSQRINSASQTEGDELKSEQTQPKGEISEENTKIKSSEVSSQDPDSGVAGEFAPQNTTAQLENPKTEDNNAATSNISNGSSTQDMK.

The residue at position 234 (Ser234) is a Phosphoserine. The segment at 648–752 (RKKRALEEEA…SNGSSTQDMK (105 aa)) is disordered. The segment covering 692–702 (EISEENTKIKS) has biased composition (basic and acidic residues). Positions 720 to 752 (PQNTTAQLENPKTEDNNAATSNISNGSSTQDMK) are enriched in polar residues.

In terms of assembly, component of the THO complex, which is composed of HPR1, MFT1, THO2 and THP2. Together with SUB2, TEX1 and YRA1, THO forms the transcription/export (TREX) complex. THO associates with DNA and RNA in vitro.

Its subcellular location is the nucleus. Component the THO subcomplex of the TREX complex, which operates in coupling transcription elongation to mRNA export. The THO complex is recruited to transcribed genes and moves along the gene with the elongating polymerase during transcription. THO is important for stabilizing nascent RNA in the RNA polymerase II elongation complex by preventing formation of DNA:RNA hybrids behind the elongating polymerase. It functions in cotranscriptional formation of an export-competent messenger ribonucleoprotein particle (mRNP) by facilitating the loading of ATP-dependent RNA helicase SUB2 and the mRNA export factor YRA1 along the nascent mRNA. The polypeptide is THO complex subunit HPR1 (HPR1) (Saccharomyces cerevisiae (strain ATCC 204508 / S288c) (Baker's yeast)).